A 430-amino-acid chain; its full sequence is Tol-Pal system protein TolB (430 aa).

A signal peptide spans methionine 1 to alanine 21.

The protein belongs to the TolB family. In terms of assembly, the Tol-Pal system is composed of five core proteins: the inner membrane proteins TolA, TolQ and TolR, the periplasmic protein TolB and the outer membrane protein Pal. They form a network linking the inner and outer membranes and the peptidoglycan layer.

The protein resides in the periplasm. Functionally, part of the Tol-Pal system, which plays a role in outer membrane invagination during cell division and is important for maintaining outer membrane integrity. TolB occupies a key intermediary position in the Tol-Pal system because it communicates directly with both membrane-embedded components, Pal in the outer membrane and TolA in the inner membrane. The sequence is that of Tol-Pal system protein TolB from Shigella flexneri.